We begin with the raw amino-acid sequence, 418 residues long: Putative competence-damage inducible protein (418 aa).

It belongs to the CinA family.

In Streptococcus pneumoniae (strain 70585), this protein is Putative competence-damage inducible protein.